Here is a 189-residue protein sequence, read N- to C-terminus: Prostaglandin-H2 D-isomerase (189 aa).

The first 24 residues, Met-1 to Ala-24, serve as a signal peptide directing secretion. Gln-25 bears the Pyrrolidone carboxylic acid mark. An N-linked (GlcNAc...) asparagine glycan is attached at Asn-49. Cys-63 functions as the Nucleophile in the catalytic mechanism. Residue Asn-76 is glycosylated (N-linked (GlcNAc...) asparagine). An intrachain disulfide couples Cys-87 to Cys-184.

The protein belongs to the calycin superfamily. Lipocalin family. In terms of assembly, monomer. As to expression, abundant in the brain and CNS, where it is expressed in tissues of the blood-brain barrier and secreted into the cerebro-spinal fluid.

It is found in the rough endoplasmic reticulum. The protein resides in the nucleus membrane. Its subcellular location is the golgi apparatus. It localises to the cytoplasm. The protein localises to the perinuclear region. It is found in the secreted. It catalyses the reaction prostaglandin H2 = prostaglandin D2. Catalyzes the conversion of PGH2 to PGD2, a prostaglandin involved in smooth muscle contraction/relaxation and a potent inhibitor of platelet aggregation. Involved in a variety of CNS functions, such as sedation, NREM sleep and PGE2-induced allodynia, and may have an anti-apoptotic role in oligodendrocytes. Binds small non-substrate lipophilic molecules, including biliverdin, bilirubin, retinal, retinoic acid and thyroid hormone, and may act as a scavenger for harmful hydrophobic molecules and as a secretory retinoid and thyroid hormone transporter. Possibly involved in development and maintenance of the blood-brain, blood-retina, blood-aqueous humor and blood-testis barrier. It is likely to play important roles in both maturation and maintenance of the central nervous system and male reproductive system. Involved in PLA2G3-dependent maturation of mast cells. PLA2G3 is secreted by immature mast cells and acts on nearby fibroblasts upstream to PTDGS to synthesize PGD2, which in turn promotes mast cell maturation and degranulation via PTGDR. In Sus scrofa (Pig), this protein is Prostaglandin-H2 D-isomerase (PTGDS).